A 454-amino-acid polypeptide reads, in one-letter code: Epoxide hydrolase 1 (454 aa).

Residues 1 to 21 (MWLEILLASVLGFVIYWFVSK) form a helical membrane-spanning segment. Topologically, residues 22–454 (DKEETLLLGD…RKFMGLLEQQ (433 aa)) are cytoplasmic. Residue Asp-226 is the Nucleophile of the active site. At Arg-294 the chain carries Dimethylated arginine. Tyr-373 (proton donor) is an active-site residue. Residue His-430 is the Proton acceptor of the active site.

Belongs to the peptidase S33 family.

The protein localises to the microsome membrane. The protein resides in the endoplasmic reticulum membrane. It catalyses the reaction cis-stilbene oxide + H2O = (1R,2R)-hydrobenzoin. It carries out the reaction 1-(4-methoxyphenyl)-N-methyl-N-[(3-methyloxetan-3-yl)methyl]methanamine + H2O = 2-{[(4-methoxybenzyl)(methyl)amino]methyl}-2-methylpropane-1,3-diol. The enzyme catalyses 8,9-epoxy-(5Z,11Z,14Z)-eicosatrienoate + H2O = 8,9-dihydroxy-(5Z,11Z,14Z)-eicosatrienoate. The catalysed reaction is 11,12-epoxy-(5Z,8Z,14Z)-eicosatrienoate + H2O = 11,12-dihydroxy-(5Z,8Z,14Z)-eicosatrienoate. It catalyses the reaction 2-(5Z,8Z,11Z,14Z-eicosatetraenoyl)-glycerol + H2O = glycerol + (5Z,8Z,11Z,14Z)-eicosatetraenoate + H(+). Its activity is regulated as follows. Inhibited by 10-hydroxystearamide and methoxy-arachidonyl fluorophosphate. Biotransformation enzyme that catalyzes the hydrolysis of arene and aliphatic epoxides to less reactive and more water soluble dihydrodiols by the trans addition of water. May play a role in the metabolism of endogenous lipids such as epoxide-containing fatty acids. Metabolizes the abundant endocannabinoid 2-arachidonoylglycerol (2-AG) to free arachidonic acid (AA) and glycerol. Binds 20(S)-hydroxycholesterol (20(S)-OHC). The sequence is that of Epoxide hydrolase 1 (EPHX1) from Sus scrofa (Pig).